Here is a 185-residue protein sequence, read N- to C-terminus: Ribosome-recycling factor (185 aa).

It belongs to the RRF family.

Its subcellular location is the cytoplasm. Its function is as follows. Responsible for the release of ribosomes from messenger RNA at the termination of protein biosynthesis. May increase the efficiency of translation by recycling ribosomes from one round of translation to another. In Salmonella arizonae (strain ATCC BAA-731 / CDC346-86 / RSK2980), this protein is Ribosome-recycling factor.